The primary structure comprises 354 residues: Trans-L-3-hydroxyproline dehydratase (354 aa).

Residue cysteine 104 is the Proton acceptor of the active site. Substrate contacts are provided by residues 105-106 (GH), aspartate 269, and 274-275 (GS).

It belongs to the proline racemase family. Homodimer.

It catalyses the reaction trans-3-hydroxy-L-proline = 1-pyrroline-2-carboxylate + H2O. Functionally, catalyzes the dehydration of trans-3-hydroxy-L-proline to delta-1-pyrroline-2-carboxylate (Pyr2C). This is Trans-L-3-hydroxyproline dehydratase (L3HYPDH) from Pongo abelii (Sumatran orangutan).